The sequence spans 695 residues: Methionine synthase reductase (695 aa).

The Flavodoxin-like domain occupies 4 to 147; the sequence is FLLLYATQRG…VVEPWINGLW (144 aa). FMN-binding positions include 10–14 and 93–124; these read TQRGQ and LLGL…QRFY. Residues 166 to 245 form a hinge region; that stretch reads TLTMASHASR…ASLNIPSLPP (80 aa). Phosphoserine is present on residues Ser171 and Ser187. Positions 269 to 531 constitute an FAD-binding FR-type domain; sequence DPVFHVPVSK…PRTTNSFHLP (263 aa). Lys289 serves as a coordination point for NADP(+). FAD-binding positions include 449–452 and 485–488; these read RPYS and GVCT. Residues 608 to 609, 622 to 624, and Asp657 each bind NADP(+); these read SR and YVQ. Trp695 is an FAD binding site.

In terms of assembly, forms a multiprotein complex with MMACHC, MMADHC and MTR. Requires FAD as cofactor. FMN serves as cofactor.

It is found in the cytoplasm. It catalyses the reaction 2 methylcob(III)alamin-[methionine synthase] + 2 S-adenosyl-L-homocysteine + NADP(+) + H(+) = 2 cob(II)alamin-[methionine synthase] + 2 S-adenosyl-L-methionine + NADPH. It carries out the reaction 2 cob(II)alamin + A + 2 H2O + 2 H(+) = 2 aquacob(III)alamin + AH2. In terms of biological role, key enzyme in methionine and folate homeostasis responsible for the reactivation of methionine synthase (MTR/MS) activity by catalyzing the reductive methylation of MTR-bound cob(II)alamin. Cobalamin (vitamin B12) forms a complex with MTR to serve as an intermediary in methyl transfer reactions that cycles between MTR-bound methylcob(III)alamin and MTR bound-cob(I)alamin forms, and occasional oxidative escape of the cob(I)alamin intermediate during the catalytic cycle leads to the inactive cob(II)alamin species. The processing of cobalamin in the cytosol occurs in a multiprotein complex composed of at least MMACHC, MMADHC, MTRR and MTR which may contribute to shuttle safely and efficiently cobalamin towards MTR in order to produce methionine. Also necessary for the utilization of methyl groups from the folate cycle, thereby affecting transgenerational epigenetic inheritance. Also acts as a molecular chaperone for methionine synthase by stabilizing apoMTR and incorporating methylcob(III)alamin into apoMTR to form the holoenzyme. Also serves as an aquacob(III)alamin reductase by reducing aquacob(III)alamin to cob(II)alamin; this reduction leads to stimulation of the conversion of apoMTR and aquacob(III)alamin to MTR holoenzyme. In Bos taurus (Bovine), this protein is Methionine synthase reductase (MTRR).